Consider the following 186-residue polypeptide: MSRLSIFPDHGDGGDGALPLPKLVCNDPASIQAELADRCVGFEQWPAAHALPPDADQSTILTTYASEVARVQRDGGYQTVDAIRMTPDHPEREALRNKFLSEHTHAEDEVRFFVEGQGLFSLHIDKEVLVTLCERGDLISVPAGTRHWFDMGPTPSFCALRFFNNSEGWVATFTGDSIAERFPRLD.

The Fe(2+) site is built by H103, H105, E109, and H147. H103, H105, E109, and H147 together coordinate Ni(2+).

It belongs to the acireductone dioxygenase (ARD) family. In terms of assembly, monomer. The cofactor is Fe(2+). Requires Ni(2+) as cofactor.

It carries out the reaction 1,2-dihydroxy-5-(methylsulfanyl)pent-1-en-3-one + O2 = 3-(methylsulfanyl)propanoate + CO + formate + 2 H(+). It catalyses the reaction 1,2-dihydroxy-5-(methylsulfanyl)pent-1-en-3-one + O2 = 4-methylsulfanyl-2-oxobutanoate + formate + 2 H(+). It functions in the pathway amino-acid biosynthesis; L-methionine biosynthesis via salvage pathway; L-methionine from S-methyl-5-thio-alpha-D-ribose 1-phosphate: step 5/6. Catalyzes 2 different reactions between oxygen and the acireductone 1,2-dihydroxy-3-keto-5-methylthiopentene (DHK-MTPene) depending upon the metal bound in the active site. Fe-containing acireductone dioxygenase (Fe-ARD) produces formate and 2-keto-4-methylthiobutyrate (KMTB), the alpha-ketoacid precursor of methionine in the methionine recycle pathway. Ni-containing acireductone dioxygenase (Ni-ARD) produces methylthiopropionate, carbon monoxide and formate, and does not lie on the methionine recycle pathway. This chain is Acireductone dioxygenase, found in Parasynechococcus marenigrum (strain WH8102).